Consider the following 90-residue polypeptide: DNA-binding protein HU-beta (90 aa).

The protein belongs to the bacterial histone-like protein family. In terms of assembly, heterodimer of an alpha and a beta chain.

Functionally, histone-like DNA-binding protein which is capable of wrapping DNA to stabilize it, and thus to prevent its denaturation under extreme environmental conditions. This is DNA-binding protein HU-beta (hupB) from Pseudomonas fluorescens (strain ATCC BAA-477 / NRRL B-23932 / Pf-5).